Reading from the N-terminus, the 83-residue chain is MSGNTGERSFADIITSIRYWVIHSITIPSLFIAGWLFVSTGLAYDVFGSPRPNEYFTDSRQEVPLITGRFDSLEQLDEFTRSF.

A helical membrane pass occupies residues 21 to 35 (VIHSITIPSLFIAGW). Histidine 23 contacts heme.

This sequence belongs to the PsbE/PsbF family. In terms of assembly, heterodimer of an alpha subunit and a beta subunit. PSII is composed of 1 copy each of membrane proteins PsbA, PsbB, PsbC, PsbD, PsbE, PsbF, PsbH, PsbI, PsbJ, PsbK, PsbL, PsbM, PsbT, PsbX, PsbY, PsbZ, Psb30/Ycf12, at least 3 peripheral proteins of the oxygen-evolving complex and a large number of cofactors. It forms dimeric complexes. The cofactor is heme b.

It localises to the plastid. Its subcellular location is the chloroplast thylakoid membrane. This b-type cytochrome is tightly associated with the reaction center of photosystem II (PSII). PSII is a light-driven water:plastoquinone oxidoreductase that uses light energy to abstract electrons from H(2)O, generating O(2) and a proton gradient subsequently used for ATP formation. It consists of a core antenna complex that captures photons, and an electron transfer chain that converts photonic excitation into a charge separation. This chain is Cytochrome b559 subunit alpha, found in Ginkgo biloba (Ginkgo).